Here is a 289-residue protein sequence, read N- to C-terminus: 4-diphosphocytidyl-2-C-methyl-D-erythritol kinase (289 aa).

Residue lysine 10 is part of the active site. 94-104 (PVAAGLAGGSS) is a binding site for ATP. Aspartate 136 is a catalytic residue.

This sequence belongs to the GHMP kinase family. IspE subfamily.

The enzyme catalyses 4-CDP-2-C-methyl-D-erythritol + ATP = 4-CDP-2-C-methyl-D-erythritol 2-phosphate + ADP + H(+). It participates in isoprenoid biosynthesis; isopentenyl diphosphate biosynthesis via DXP pathway; isopentenyl diphosphate from 1-deoxy-D-xylulose 5-phosphate: step 3/6. Its function is as follows. Catalyzes the phosphorylation of the position 2 hydroxy group of 4-diphosphocytidyl-2C-methyl-D-erythritol. The chain is 4-diphosphocytidyl-2-C-methyl-D-erythritol kinase from Bacillus licheniformis (strain ATCC 14580 / DSM 13 / JCM 2505 / CCUG 7422 / NBRC 12200 / NCIMB 9375 / NCTC 10341 / NRRL NRS-1264 / Gibson 46).